Here is a 244-residue protein sequence, read N- to C-terminus: tRNA pseudouridine synthase A (244 aa).

Residue Asp-52 is the Nucleophile of the active site. A substrate-binding site is contributed by Tyr-110.

It belongs to the tRNA pseudouridine synthase TruA family. As to quaternary structure, homodimer.

The enzyme catalyses uridine(38/39/40) in tRNA = pseudouridine(38/39/40) in tRNA. Its function is as follows. Formation of pseudouridine at positions 38, 39 and 40 in the anticodon stem and loop of transfer RNAs. The sequence is that of tRNA pseudouridine synthase A from Finegoldia magna (strain ATCC 29328 / DSM 20472 / WAL 2508) (Peptostreptococcus magnus).